The chain runs to 156 residues: Small ribosomal subunit protein uS7 (156 aa).

This sequence belongs to the universal ribosomal protein uS7 family. Part of the 30S ribosomal subunit. Contacts proteins S9 and S11.

One of the primary rRNA binding proteins, it binds directly to 16S rRNA where it nucleates assembly of the head domain of the 30S subunit. Is located at the subunit interface close to the decoding center, probably blocks exit of the E-site tRNA. The chain is Small ribosomal subunit protein uS7 from Streptococcus suis (strain 98HAH33).